The following is a 414-amino-acid chain: Cytochrome c-554 (414 aa).

The first 24 residues, 1 to 24 (MQSSRPSDRQLAIVVSVAVGIVVA), serve as a signal peptide directing secretion. Heme-binding residues include M110, C131, C134, H135, M154, C179, C182, H183, M283, C294, C297, H298, C378, C381, and H382.

In terms of processing, binds 4 heme groups per subunit. Post-translationally, the N-terminus is blocked.

The protein resides in the periplasm. Serves as the immediate electron donor to the oxidized BChl2 (bacteriochlorophyll dimer) that is oxidized in the first step of light-induced charge separation. Can also oxidize low-potential substrates. The chain is Cytochrome c-554 (puf2C) from Chloroflexus aurantiacus (strain ATCC 29366 / DSM 635 / J-10-fl).